The sequence spans 243 residues: Uridylate kinase (243 aa).

Residue 15 to 18 coordinates ATP; that stretch reads KLSG. An involved in allosteric activation by GTP region spans residues 23–28; sequence GEEGFG. Glycine 57 lines the UMP pocket. Residues glycine 58 and arginine 62 each contribute to the ATP site. Residues aspartate 77 and 138 to 145 contribute to the UMP site; that span reads TGNPFCTT. Residues threonine 165, tyrosine 171, and aspartate 174 each contribute to the ATP site.

Belongs to the UMP kinase family. As to quaternary structure, homohexamer.

It is found in the cytoplasm. It carries out the reaction UMP + ATP = UDP + ADP. It participates in pyrimidine metabolism; CTP biosynthesis via de novo pathway; UDP from UMP (UMPK route): step 1/1. Allosterically activated by GTP. Inhibited by UTP. Functionally, catalyzes the reversible phosphorylation of UMP to UDP. The polypeptide is Uridylate kinase (Shewanella denitrificans (strain OS217 / ATCC BAA-1090 / DSM 15013)).